The sequence spans 476 residues: Probable serine carboxypeptidase CPVL (476 aa).

The signal sequence occupies residues 1–22 (MVGAMWKVIVSLVLLMPGPCDG). Residues Asn81 and Asn132 are each glycosylated (N-linked (GlcNAc...) asparagine). Ser204 is an active-site residue. 2 N-linked (GlcNAc...) asparagine glycosylation sites follow: Asn307 and Asn346. Catalysis depends on residues Asp388 and His448.

This sequence belongs to the peptidase S10 family. In terms of tissue distribution, expressed in macrophages but not in other leukocytes. Abundantly expressed in heart and kidney. Also expressed in spleen, leukocytes, and placenta.

Its function is as follows. May be involved in the digestion of phagocytosed particles in the lysosome, participation in an inflammatory protease cascade, and trimming of peptides for antigen presentation. In Homo sapiens (Human), this protein is Probable serine carboxypeptidase CPVL (CPVL).